The sequence spans 153 residues: MKTFVLHIFIFALVAFASASRDSAKKIGSQYDNYETCLTEHGLTDDDIFSIGEVSSGQHKTNHEDTELHKNGCVLQCMLEKDGLMSGADYDEEKMREDYIKETGTEPGDQRIEALNACMQETKDMEDKCDKSLLLVACVLAAEAVLADSNEGA.

The N-terminal stretch at 1-19 (MKTFVLHIFIFALVAFASA) is a signal peptide. 3 disulfides stabilise this stretch: C37–C77, C73–C129, and C118–C138.

This sequence belongs to the PBP/GOBP family. As to quaternary structure, homodimer.

The protein resides in the secreted. Colony queen number, a major feature of social organization, is associated with worker genotype for Gp-9. Colonies are headed by either a single reproductive queen (monogyne form) or multiple queens (polygyne form). Differences in worker Gp-9 genotypes between social forms may cause differences in workers' abilities to recognize queens and regulate their numbers. This Solenopsis interrupta (Fire ant) protein is Pheromone-binding protein Gp-9.